The following is a 308-amino-acid chain: Glutaminase (308 aa).

Residues Ser66, Asn117, Glu161, Asn168, Tyr192, Tyr244, and Val262 each contribute to the substrate site.

The protein belongs to the glutaminase family. Homotetramer.

It catalyses the reaction L-glutamine + H2O = L-glutamate + NH4(+). In Enterobacter sp. (strain 638), this protein is Glutaminase.